Here is a 249-residue protein sequence, read N- to C-terminus: Zinc finger protein CG30 (249 aa).

Residues 8-66 form an RING-type zinc finger; that stretch reads CHICCSVGEIKNYFLQPVDAITILPIVELHTCRHQLCVMCVRKIAQRGRDKRVECPMCR.

The protein is Zinc finger protein CG30 (CG30) of Orgyia pseudotsugata (Douglas-fir tussock moth).